Consider the following 186-residue polypeptide: ATP-dependent protease subunit HslV (186 aa).

Residue T14 is part of the active site. A168, C171, and T174 together coordinate Na(+).

This sequence belongs to the peptidase T1B family. HslV subfamily. A double ring-shaped homohexamer of HslV is capped on each side by a ring-shaped HslU homohexamer. The assembly of the HslU/HslV complex is dependent on binding of ATP.

It is found in the cytoplasm. It catalyses the reaction ATP-dependent cleavage of peptide bonds with broad specificity.. Its activity is regulated as follows. Allosterically activated by HslU binding. Functionally, protease subunit of a proteasome-like degradation complex believed to be a general protein degrading machinery. This is ATP-dependent protease subunit HslV from Bradyrhizobium diazoefficiens (strain JCM 10833 / BCRC 13528 / IAM 13628 / NBRC 14792 / USDA 110).